The primary structure comprises 1378 residues: DNA-directed RNA polymerase subunit beta (1378 aa).

It belongs to the RNA polymerase beta chain family. The RNAP catalytic core consists of 2 alpha, 1 beta, 1 beta' and 1 omega subunit. When a sigma factor is associated with the core the holoenzyme is formed, which can initiate transcription.

The enzyme catalyses RNA(n) + a ribonucleoside 5'-triphosphate = RNA(n+1) + diphosphate. Its function is as follows. DNA-dependent RNA polymerase catalyzes the transcription of DNA into RNA using the four ribonucleoside triphosphates as substrates. The sequence is that of DNA-directed RNA polymerase subunit beta from Campylobacter jejuni (strain RM1221).